The following is a 70-amino-acid chain: Large ribosomal subunit protein uL29 (70 aa).

Belongs to the universal ribosomal protein uL29 family.

The chain is Large ribosomal subunit protein uL29 from Prochlorococcus marinus (strain MIT 9211).